The chain runs to 670 residues: Transcriptional regulatory protein DOT6 (670 aa).

The span at 1–44 (MSISTSLNSASIHLSSMDTHPQLHSLTRQPHSSSTAMSKNEAQE) shows a compositional bias: polar residues. Residues 1 to 78 (MSISTSLNSA…SKNPSSWDPQ (78 aa)) form a disordered region. The span at 45 to 74 (SSPSLPASSSSSTSASASASSKNSSKNPSS) shows a compositional bias: low complexity. The region spanning 67 to 121 (NSSKNPSSWDPQDDLLLRHLKEVKKMGWKDISQYFPNRTPNACQFRWRRLKSGNL) is the HTH myb-type domain. The H-T-H motif DNA-binding region spans 94-117 (WKDISQYFPNRTPNACQFRWRRLK). A compositionally biased stretch (basic residues) spans 226-242 (HHPHQHLHHHPHHKTLK). Disordered stretches follow at residues 226 to 250 (HHPHQHLHHHPHHKTLKPRSNSHSF), 293 to 332 (TTPSSPNSSHVLLSSKSRRGSLANWSRRSSFNVSSNNTSR), 406 to 436 (HSSSVSSSSTLHKSKRGSFSGHSMKSSCNPT), and 483 to 659 (ADML…NSPL). Phosphoserine is present on residues Ser-245 and Ser-247. 2 stretches are compositionally biased toward low complexity: residues 295 to 307 (PSSPNSSHVLLSS) and 316 to 332 (NWSRRSSFNVSSNNTSR). Polar residues predominate over residues 425–436 (SGHSMKSSCNPT). Ser-487 is modified (phosphoserine). At Thr-489 the chain carries Phosphothreonine. Ser-491 carries the phosphoserine modification. Positions 512–522 (DDDKGSDKEDV) are enriched in basic and acidic residues. 2 stretches are compositionally biased toward low complexity: residues 544 to 561 (SSNKTVFSSSSSNISSKD) and 587 to 598 (TITSDTSSSAAT). Over residues 599–608 (MNRTPNSKNP) the composition is skewed to polar residues. Low complexity predominate over residues 622 to 659 (ITPRPKPSSTTTSITTETTNNMINHSSSTTTTTNNSPL).

The protein belongs to the DOT6 family. Component of the RPD3C(L) complex composed of at least ASH1, CTI6, DEP1, DOT6, PHO23, RPD3, RXT2, RXT3, SAP30, SDS3, SIN3, TOD6; UME1 and UME6.

It is found in the nucleus. Its function is as follows. Component of the RPD3 histone deacetylase complex RPD3C(L) responsible for the deacetylation of lysine residues on the N-terminal part of the core histones (H2A, H2B, H3 and H4). Histone deacetylation gives a tag for epigenetic repression and plays an important role in transcriptional regulation, cell cycle progression and developmental events. DOT6 binds to sequences containing the core CGATG, which resembles the PAC (Polymerase A and C) motif. The sequence is that of Transcriptional regulatory protein DOT6 (DOT6) from Saccharomyces cerevisiae (strain ATCC 204508 / S288c) (Baker's yeast).